The chain runs to 338 residues: Glycerol-3-phosphate dehydrogenase [NAD(P)+] 1 (338 aa).

Positions 11, 12, 32, 33, and 109 each coordinate NADPH. Sn-glycerol 3-phosphate contacts are provided by lysine 109, glycine 140, and serine 142. Alanine 144 contacts NADPH. Residues lysine 195, aspartate 248, serine 258, arginine 259, and asparagine 260 each coordinate sn-glycerol 3-phosphate. Lysine 195 functions as the Proton acceptor in the catalytic mechanism. Arginine 259 contributes to the NADPH binding site. NADPH-binding residues include valine 283 and glutamate 285.

It belongs to the NAD-dependent glycerol-3-phosphate dehydrogenase family.

The protein resides in the cytoplasm. It carries out the reaction sn-glycerol 3-phosphate + NAD(+) = dihydroxyacetone phosphate + NADH + H(+). The enzyme catalyses sn-glycerol 3-phosphate + NADP(+) = dihydroxyacetone phosphate + NADPH + H(+). The protein operates within membrane lipid metabolism; glycerophospholipid metabolism. Functionally, catalyzes the reduction of the glycolytic intermediate dihydroxyacetone phosphate (DHAP) to sn-glycerol 3-phosphate (G3P), the key precursor for phospholipid synthesis. This is Glycerol-3-phosphate dehydrogenase [NAD(P)+] 1 from Lactobacillus delbrueckii subsp. bulgaricus (strain ATCC 11842 / DSM 20081 / BCRC 10696 / JCM 1002 / NBRC 13953 / NCIMB 11778 / NCTC 12712 / WDCM 00102 / Lb 14).